The chain runs to 382 residues: MGDWSALGKLLDKVQAYSTAGGKVWLSVLFIFRILLLGTAVESAWGDEQSAFRCNTQQPGCENVCYDKSFPISHVRFWVLQIIFVSVPTLLYLAHVFYVMRKEEKLNKKEEELKVAQTDGVNVEMHLKQIEIKKFKYGIEEHGKVKMRGGLLRTYIISILFKSVFEVAFLLIQWYIYGFSLSAVYTCKRDPCPHQVDCFLSRPTEKTIFIIFMLVVSLVSLALNIIELFYVFFKGVKDRVKGRSDPYHATTGPLSPSKDCGSPKYAYFNGCSSPTAPLSPMSPPGYKLVTGDRNNSSCRNYNKQASEQNWANYSAEQNRMGQAGSTISNSHAQPFDFPDDSQNAKKVAAGHELQPLAIVDQRPSSRASSRASSRPRPDDLEI.

Residues 2–23 (GDWSALGKLLDKVQAYSTAGGK) are Cytoplasmic-facing. Ser-5 carries the post-translational modification Phosphoserine. Residues 24-44 (VWLSVLFIFRILLLGTAVESA) form a helical membrane-spanning segment. The Extracellular segment spans residues 45 to 76 (WGDEQSAFRCNTQQPGCENVCYDKSFPISHVR). Disulfide bonds link Cys-54-Cys-192 and Cys-187-Cys-198. The helical transmembrane segment at 77-97 (FWVLQIIFVSVPTLLYLAHVF) threads the bilayer. Over 98-155 (YVMRKEEKLNKKEEELKVAQTDGVNVEMHLKQIEIKKFKYGIEEHGKVKMRGGLLRTY) the chain is Cytoplasmic. Lys-144 participates in a covalent cross-link: Glycyl lysine isopeptide (Lys-Gly) (interchain with G-Cter in SUMO). The helical transmembrane segment at 156-176 (IISILFKSVFEVAFLLIQWYI) threads the bilayer. At 177-207 (YGFSLSAVYTCKRDPCPHQVDCFLSRPTEKT) the chain is on the extracellular side. A helical transmembrane segment spans residues 208-228 (IFIIFMLVVSLVSLALNIIEL). The Cytoplasmic portion of the chain corresponds to 229 to 382 (FYVFFKGVKD…SRPRPDDLEI (154 aa)). Lys-237 is covalently cross-linked (Glycyl lysine isopeptide (Lys-Gly) (interchain with G-Cter in SUMO)). Residues 244–382 (SDPYHATTGP…SRPRPDDLEI (139 aa)) are interaction with NOV. Tyr-247 bears the Phosphotyrosine mark. Phosphoserine is present on residues Ser-255, Ser-257, and Ser-262. Residues 264 to 382 (KYAYFNGCSS…SRPRPDDLEI (119 aa)) form an interaction with UBQLN4 region. The residue at position 271 (Cys-271) is an S-nitrosocysteine. Thr-275 carries the post-translational modification Phosphothreonine. A phosphoserine mark is found at Ser-306, Ser-314, and Ser-325. Over residues 317–332 (QNRMGQAGSTISNSHA) the composition is skewed to polar residues. The interval 317–382 (QNRMGQAGST…SRPRPDDLEI (66 aa)) is disordered. Thr-326 carries the phosphothreonine modification. 4 positions are modified to phosphoserine: Ser-328, Ser-330, Ser-341, and Ser-365. Residues 362–374 (RPSSRASSRASSR) show a composition bias toward low complexity. A Phosphoserine; by PKC/PRKCG and PKC/PRKCD modification is found at Ser-368. Residues Ser-369 and Ser-373 each carry the phosphoserine modification.

It belongs to the connexin family. Alpha-type (group II) subfamily. In terms of assembly, a connexon is composed of a hexamer of connexins. Interacts with CSNK1D. Interacts with RIC1/CIP150. Interacts (via C-terminus) with TJP1. Interacts (via C-terminus) with SRC (via SH3 domain). Interacts (not ubiquitinated) with UBQLN4 (via UBA domain). Interacts with CNST. Interacts with SGSM3. Interacts with NOV. Interacts with TMEM65. Interacts with ANK3/ANKG and PKP2. Phosphorylation at Ser-325, Ser-328 and Ser-330 by CK1 modulates gap junction assembly. Phosphorylated at Ser-368 by PRKCG; phosphorylation induces disassembly of gap junction plaques and inhibition of gap junction activity. Phosphorylation at Ser-368 by PRKCD triggers its internalization into small vesicles leading to proteasome-mediated degradation. In terms of processing, sumoylated with SUMO1, SUMO2 and SUMO3, which may regulate the level of functional Cx43 gap junctions at the plasma membrane. May be desumoylated by SENP1 or SENP2. Post-translationally, acetylated in the developing cortex; leading to delocalization from the cell membrane. S-nitrosylation at Cys-271 is enriched at the muscle endothelial gap junction in arteries, it augments channel permeability and may regulate of smooth muscle cell to endothelial cell communication. In terms of tissue distribution, expressed in heart, non-sensory epithelial cells, and in fibrocytes of the spiral ligament and the spiral limbus. Expressed in bladder smooth muscle cells (at protein level). Expressed in astrocytes (at protein level).

The protein localises to the cell membrane. The protein resides in the cell junction. It localises to the gap junction. It is found in the endoplasmic reticulum. In terms of biological role, gap junction protein that acts as a regulator of bladder capacity. A gap junction consists of a cluster of closely packed pairs of transmembrane channels, the connexons, through which materials of low MW diffuse from one cell to a neighboring cell. Negative regulator of bladder functional capacity: acts by enhancing intercellular electrical and chemical transmission, thus sensitizing bladder muscles to cholinergic neural stimuli and causing them to contract. May play a role in cell growth inhibition through the regulation of NOV expression and localization. Plays an essential role in gap junction communication in the ventricles. Connexin 43 is possibly the ATP-induced pore of mouse macrophages. The protein is Gap junction alpha-1 protein (Gja1) of Mus musculus (Mouse).